The sequence spans 530 residues: Structure-specific endonuclease subunit SLX1 homolog 2 (530 aa).

Residues R4–Q89 form the GIY-YIG domain. The SLX1-type zinc finger occupies C232–C365. 3 disordered regions span residues A276–H306, N410–D438, and L474–D502. The span at R283 to S298 shows a compositional bias: basic and acidic residues.

The protein belongs to the SLX1 family. Forms a heterodimer with a member of the SLX4 family. A divalent metal cation serves as cofactor.

The protein resides in the nucleus. Its function is as follows. Catalytic subunit of a heterodimeric structure-specific endonuclease that resolves DNA secondary structures generated during DNA repair and recombination. Has endonuclease activity towards branched DNA substrates, introducing single-strand cuts in duplex DNA close to junctions with ss-DNA. This is Structure-specific endonuclease subunit SLX1 homolog 2 from Trypanosoma cruzi (strain CL Brener).